Consider the following 40-residue polypeptide: Acyl-CoA-binding protein 2 (40 aa).

A compositionally biased stretch (basic and acidic residues) spans 1–15; it reads ALKEEFEEHAEKAKT. Residues 1 to 25 form a disordered region; that stretch reads ALKEEFEEHAEKAKTLPENTSSENK. The ACB domain occupies 2–40; it reads LKEEFEEHAEKAKTLPENTSSENKLTLYGLYKQATVGNV.

This sequence belongs to the ACBP family.

It is found in the cytoplasm. Binds medium- and long-chain acyl-CoA esters with very high affinity and may function as an intracellular carrier of acyl-CoA esters. This is Acyl-CoA-binding protein 2 from Digitalis lanata (Grecian foxglove).